The sequence spans 1575 residues: Ras GTPase-activating-like protein IQGAP2 (1575 aa).

Phosphoserine is present on S16. A Calponin-homology (CH) domain is found at 41 to 156; that stretch reads LCHLEEAKRW…YCIHALSLYL (116 aa). A Phosphothreonine modification is found at T356. The WW domain maps to 594 to 627; the sequence is VSSDGSWLKLNLHKKYDYYYNTDSKESSWVTPES. 3 positions are modified to phosphoserine: S595, S599, and S685. IQ domains follow at residues 690–719, 720–749, and 750–779; these read QEEN…TFID, NTDS…YFRD, and HNNE…SENP. Position 716 is a phosphothreonine (T716). Residues T782, T881, T1002, and T1269 each carry the phosphothreonine modification. A Ras-GAP domain is found at 933-1182; the sequence is YLLLKLFKTA…QEFRKYFKEA (250 aa). Residues S1271, S1279, S1358, and S1461 each carry the phosphoserine modification.

As to expression, isoform 2 expression is enhanced in testis.

In terms of biological role, binds to activated CDC42 and RAC1 but does not seem to stimulate their GTPase activity. Associates with calmodulin. This is Ras GTPase-activating-like protein IQGAP2 (IQGAP2) from Homo sapiens (Human).